We begin with the raw amino-acid sequence, 496 residues long: Beta-amylase (496 aa).

Alanine 2 carries the post-translational modification N-acetylalanine. Substrate-binding residues include aspartate 54, histidine 94, and aspartate 102. Glutamate 187 (proton donor) is an active-site residue. Residues lysine 296, histidine 301, and threonine 343 each coordinate substrate. Glutamate 381 (proton acceptor) is an active-site residue. Substrate-binding positions include 382-383 and arginine 421; that span reads NA.

The protein belongs to the glycosyl hydrolase 14 family. In terms of assembly, monomer.

The enzyme catalyses Hydrolysis of (1-&gt;4)-alpha-D-glucosidic linkages in polysaccharides so as to remove successive maltose units from the non-reducing ends of the chains.. The polypeptide is Beta-amylase (BMY1) (Glycine max (Soybean)).